Here is a 225-residue protein sequence, read N- to C-terminus: C-reactive protein (225 aa).

A signal peptide spans 1 to 20; the sequence is MEKLLWCFLTLVSFSNMSDQ. Residues 24 to 225 form the Pentraxin (PTX) domain; sequence HKKAFVFPKE…EVHVKPQLWP (202 aa). The cysteines at positions 55 and 116 are disulfide-linked. Asn-80, Gln-158, Asp-159, and Gln-169 together coordinate Ca(2+).

The protein belongs to the pentraxin family. As to quaternary structure, homopentamer. Pentraxin (or pentaxin) have a discoid arrangement of 5 non-covalently bound subunits. Interacts with FCN1; may regulate monocyte activation by FCN1. The cofactor is Ca(2+). In terms of tissue distribution, found in plasma.

The protein resides in the secreted. Its function is as follows. Displays several functions associated with host defense: it promotes agglutination, bacterial capsular swelling, phagocytosis and complement fixation through its calcium-dependent binding to phosphorylcholine. Can interact with DNA and histones and may scavenge nuclear material released from damaged circulating cells. This is C-reactive protein (CRP) from Oryctolagus cuniculus (Rabbit).